The sequence spans 356 residues: MRVTDFSFELPESLIAHYPMPERSSCRLLSLDGPTGALTHGTFTDLLDKLNPGDLLVFNNTRVIPARLFGRKASGGKIEVLVERMLDDKRIFAHIRASKAPKPGAELLLGDDESINATMTARHGALFEVEFNDQRSVLDILNSIGHMPLPPYIDRPDEDADRELYQTVYSEKPGAVAAPTAGLHFDEPLLEKLRAKGVEMAFVTLHVGAGTFQPVRVDTIEDHIMHSEYAEVPQDVVDAVLAAKARGNRVIAVGTTSVRSLESAAQAAKNDLIEPFFDDTQIFIYPGFQYKVVDALVTNFHLPESTLIMLVSAFAGYQHTMNAYKAAVEEKYRFFSYGDAMFITYNPQAINERVGE.

The protein belongs to the QueA family. As to quaternary structure, monomer.

It is found in the cytoplasm. It carries out the reaction 7-aminomethyl-7-carbaguanosine(34) in tRNA + S-adenosyl-L-methionine = epoxyqueuosine(34) in tRNA + adenine + L-methionine + 2 H(+). It functions in the pathway tRNA modification; tRNA-queuosine biosynthesis. Its function is as follows. Transfers and isomerizes the ribose moiety from AdoMet to the 7-aminomethyl group of 7-deazaguanine (preQ1-tRNA) to give epoxyqueuosine (oQ-tRNA). The protein is S-adenosylmethionine:tRNA ribosyltransferase-isomerase of Escherichia coli O81 (strain ED1a).